We begin with the raw amino-acid sequence, 288 residues long: HTH-type transcriptional regulator CzcR (288 aa).

The HTH lysR-type domain maps to 1 to 58 (MELRDLQIFKCVAHHKSITGAAKELNYVQSNVTARIKQLENELKTPLFNRHKKGVSLS). The H-T-H motif DNA-binding region spans 18-37 (ITGAAKELNYVQSNVTARIK).

It belongs to the LysR transcriptional regulatory family.

This is HTH-type transcriptional regulator CzcR (czcR) from Bacillus subtilis (strain 168).